The primary structure comprises 320 residues: Polyprenyl transferase pyr6 (320 aa).

6 helical membrane-spanning segments follow: residues 22–42, 60–80, 101–121, 127–147, 155–175, and 186–206; these read KYNCLFAIFPGVWSIFLAAAS, GLAFAYTYLLSGAGMVWNDWI, LATRAAIIWMLVQYAASVWLM, GQNLWTFMLPLTTGIILYPFG, LGIYPQYILGASSALTILPAW, and PDLLAKCLPLCVFLFLWTIYF. Asn224 is a glycosylation site (N-linked (GlcNAc...) asparagine). Residues 233–253 form a helical membrane-spanning segment; the sequence is YVHGLLLLQAVAVVMVIPWIL. A glycan (N-linked (GlcNAc...) asparagine) is linked at Asn256. 2 helical membrane-spanning segments follow: residues 260–280 and 296–316; these read WLWFSWLGVWTAALAEQLYLF and FALGIWNVLACFVELLLVSGS.

Belongs to the UbiA prenyltransferase family. Mg(2+) serves as cofactor.

Its subcellular location is the membrane. It carries out the reaction 4-hydroxy-6-(pyridin-3-yl)-2H-pyran-2-one + (2E,6E)-farnesyl diphosphate = 4-hydroxy-3-[(2E,6E)-farnesyl]-6-(pyridin-3-yl)-2H-pyran-2-one + diphosphate. It functions in the pathway secondary metabolite biosynthesis; terpenoid biosynthesis. Its function is as follows. Polyprenyl transferase; part of the gene cluster that mediates the biosynthesis of pyripyropene A, a specific human acyl-coenzyme A:cholesterol acyltransferase 2 inhibitor. The first step of the pathway is the synthesis of nicotinyl-CoA from nicotinic acid by the nicotinic acid-CoA ligase pyr1. Nicotinyl-CoA is then a substrate of polyketide synthase pyr2 to produce 4-hydroxy-6-(3-pyridinyl)-2H-pyran-2-one (HPPO) which is further prenylated by the polyprenyl transferase pyr6 to yield farnesyl-HPPO. The next steps consist of an epoxidation of farnesyl-HPPO to epoxyfarnesyl-HPPO by FAD-dependent monooxygenase pyr5 and a cyclization of the terpenoid portion by the terpene cyclase pyr4 to yield deacetyl-pyripyropene E. The 2 cytochrome P450 monooxygenases pyr3 and pyr9, and the 2 acetyltransferases pyr7 and pyr8 are involved in the conversion of deacetyl-pyripyropene E into pyripyropene A through several cycles of oxidation and acetylation steps. Pyr7 acetylates deacetyl-pyripyropene E to pyripyropene E which is oxidized to 11-deacetyl-pyripyropene O by pyr3, which is in turn acetylated into pyripyropene O by pyr8. Pyripyropene O is then oxidized to deacetyl-pyripyropene A by pyr9. Deacetyl-pyripyropene A is finally acetylated to pyripyropene A by pyr8. This chain is Polyprenyl transferase pyr6, found in Aspergillus fumigatus (strain ATCC MYA-4609 / CBS 101355 / FGSC A1100 / Af293) (Neosartorya fumigata).